We begin with the raw amino-acid sequence, 282 residues long: DNA-binding transcriptional repressor YiaJ (282 aa).

Over residues 1–20 the composition is skewed to basic and acidic residues; it reads MGKEVMGKKENEMAQEKERP. The interval 1-21 is disordered; sequence MGKEVMGKKENEMAQEKERPA. Residues 23 to 85 form the HTH iclR-type domain; the sequence is SQSLFRGLML…PAAGSYRLTT (63 aa). Positions 45–64 form a DNA-binding region, H-T-H motif; it reads LAHLSELAGLNKSTVHRLLQ. One can recognise an IclR-ED domain in the interval 100–272; the sequence is IIHIAAPHLE…AQAISNELGF (173 aa).

Negatively controls the transcription of the yiaKLMNOPQRS operon, which may be involved in the utilization of 2,3-diketo-L-gulonate. This Escherichia coli (strain K12) protein is DNA-binding transcriptional repressor YiaJ (yiaJ).